Consider the following 485-residue polypeptide: MNEPLISDISRTGRKGYSLNSSDLIRTPHSQLIPGKFLRQSPAELPEVPESEVVRHFLRLSTLNYHVDKDMYPLGSCTMKYNPKINDETCSLEGFAALHPMQPESTVQGALQLMHELSGMLAEITGMASVTLQPAAGAHGELAGILLIKKYHEAQHSKRTTLLVVDSAHGTNPASAALAGYTIVSVKSNGIGRTDLNDLKEKLNGDVAALMLTNPNTIGLFEKEIVAIADMVHKNGSLLYMDGANMNALLGITRPGDMGFDVVHLNLHKTFSAPHGGGGPGSGPVGVCEKLIPHLPVPVIEKRATSEGARYHLTGDCPDSIGRMMNFHGNFAVLIRAYTYIRMLGAEGLRRVSENAIINANYLLSRLDGAYSLPYPKPVLHEFCLSGDLQKKSHGVRTLDIAKRLLDYGFHAPTIYFPLIVSEALMIEPTETESRETLDRFADAMLQIAKEAEECPETVLAAPETTPVRRLDEAMASRQLNICCR.

N6-(pyridoxal phosphate)lysine is present on lysine 269.

It belongs to the GcvP family. C-terminal subunit subfamily. As to quaternary structure, the glycine cleavage system is composed of four proteins: P, T, L and H. In this organism, the P 'protein' is a heterodimer of two subunits. Pyridoxal 5'-phosphate serves as cofactor.

The enzyme catalyses N(6)-[(R)-lipoyl]-L-lysyl-[glycine-cleavage complex H protein] + glycine + H(+) = N(6)-[(R)-S(8)-aminomethyldihydrolipoyl]-L-lysyl-[glycine-cleavage complex H protein] + CO2. Its function is as follows. The glycine cleavage system catalyzes the degradation of glycine. The P protein binds the alpha-amino group of glycine through its pyridoxal phosphate cofactor; CO(2) is released and the remaining methylamine moiety is then transferred to the lipoamide cofactor of the H protein. This is Probable glycine dehydrogenase (decarboxylating) subunit 2 from Chlorobium phaeovibrioides (strain DSM 265 / 1930) (Prosthecochloris vibrioformis (strain DSM 265)).